Reading from the N-terminus, the 168-residue chain is MTRLEDLPYRPCVGLAIFNRAGQVFLGQRLSGPEHVDATHSWQMPQGGIDKGEEPYEAALRELYEETSIRSVVKLGEVEDWLSYDLPGRVAGEAWKGKYRGQTQKWFALRFTGDEGEIDILKPGGGAHKAEFCNWRWDALDRAAELVIPFKRQVYERVAREFRRFAHD.

The Nudix hydrolase domain occupies 8–160 (PYRPCVGLAI…KRQVYERVAR (153 aa)). Positions 47 to 68 (GGIDKGEEPYEAALRELYEETS) match the Nudix box motif.

This sequence belongs to the Nudix hydrolase family. RppH subfamily. The cofactor is a divalent metal cation.

Its function is as follows. Accelerates the degradation of transcripts by removing pyrophosphate from the 5'-end of triphosphorylated RNA, leading to a more labile monophosphorylated state that can stimulate subsequent ribonuclease cleavage. This Azorhizobium caulinodans (strain ATCC 43989 / DSM 5975 / JCM 20966 / LMG 6465 / NBRC 14845 / NCIMB 13405 / ORS 571) protein is RNA pyrophosphohydrolase.